Here is a 1107-residue protein sequence, read N- to C-terminus: Enolase-phosphatase E1 (1107 aa).

D19 and E21 together coordinate Mg(2+). Substrate is bound by residues 152–153 (SS) and K186. A Mg(2+)-binding site is contributed by D211. The tract at residues 258–1107 (SVKSTETENG…SATPSVETES (850 aa)) is disordered. Over residues 260 to 289 (KSTETENGAEKETVTESTEKVADESEKETE) the composition is skewed to basic and acidic residues. Over residues 291–306 (ETAAAETENGAEAENG) the composition is skewed to low complexity. The segment covering 366–376 (DAMDVDAEMTD) has biased composition (acidic residues). 2 stretches are compositionally biased toward basic and acidic residues: residues 393 to 427 (VTEKTETEESPKEKETEMEAEAEVSKTDEKEDTKQ) and 435 to 462 (GEDKKGDVINKNAEDDIKVEEEKNKEEE). Over residues 475–485 (DKMDVDEEDSA) the composition is skewed to acidic residues. Basic and acidic residues-rich tracts occupy residues 486–512 (VIEKKADNVDEKPVESTTDEVAKKEEN), 534–548 (DETKEAPSDAAKEES), 572–586 (TVEKSSAEKTESKSE), 593–604 (TSEKKVEDKSAN), 610–686 (KEPK…EVKA), and 693–776 (DESK…KSVD). Low complexity predominate over residues 794–803 (EETSATTEAQ). Composition is skewed to basic and acidic residues over residues 804–838 (ATKEDEKPVDTKTNENDKTTPEVKATEEKTDDAKS) and 849–908 (KEMK…ETKG). The span at 909 to 919 (VEATTAGPVEE) shows a compositional bias: low complexity. Residues 920–935 (VAVEATEEDVAMEAES) show a composition bias toward acidic residues. 3 stretches are compositionally biased toward basic and acidic residues: residues 937–957 (DAVKEETKTEEPKSKVDKLDS), 1001–1028 (DEVKENGTSEKVNTKEESRVPENGEADS), and 1035–1047 (NHDEKADSDKEND). The span at 1048–1083 (TSASNIEEASSATTTTTNGTSTESDSSSTTPSSETV) shows a compositional bias: low complexity.

The protein belongs to the HAD-like hydrolase superfamily. MasA/MtnC family. As to quaternary structure, monomer. Requires Mg(2+) as cofactor.

Its subcellular location is the cytoplasm. The protein resides in the nucleus. The enzyme catalyses 5-methylsulfanyl-2,3-dioxopentyl phosphate + H2O = 1,2-dihydroxy-5-(methylsulfanyl)pent-1-en-3-one + phosphate. The protein operates within amino-acid biosynthesis; L-methionine biosynthesis via salvage pathway; L-methionine from S-methyl-5-thio-alpha-D-ribose 1-phosphate: step 3/6. Its pathway is amino-acid biosynthesis; L-methionine biosynthesis via salvage pathway; L-methionine from S-methyl-5-thio-alpha-D-ribose 1-phosphate: step 4/6. Functionally, bifunctional enzyme that catalyzes the enolization of 2,3-diketo-5-methylthiopentyl-1-phosphate (DK-MTP-1-P) into the intermediate 2-hydroxy-3-keto-5-methylthiopentenyl-1-phosphate (HK-MTPenyl-1-P), which is then dephosphorylated to form the acireductone 1,2-dihydroxy-3-keto-5-methylthiopentene (DHK-MTPene). This chain is Enolase-phosphatase E1, found in Aedes aegypti (Yellowfever mosquito).